Here is a 279-residue protein sequence, read N- to C-terminus: tRNA pseudouridine synthase A (279 aa).

The active-site Nucleophile is Asp54. Tyr112 is a binding site for substrate.

The protein belongs to the tRNA pseudouridine synthase TruA family. In terms of assembly, homodimer.

The enzyme catalyses uridine(38/39/40) in tRNA = pseudouridine(38/39/40) in tRNA. Formation of pseudouridine at positions 38, 39 and 40 in the anticodon stem and loop of transfer RNAs. In Cutibacterium acnes (strain DSM 16379 / KPA171202) (Propionibacterium acnes), this protein is tRNA pseudouridine synthase A.